Consider the following 88-residue polypeptide: RNA-binding protein Hfq (88 aa).

One can recognise a Sm domain in the interval 9-68 (DPYLNVLRKERVPVSIYLVNGIKLQGQVESFDQFVVLLKNTVSQMVYKHAISTVVPSRAV).

Belongs to the Hfq family. As to quaternary structure, homohexamer.

Its function is as follows. RNA chaperone that binds small regulatory RNA (sRNAs) and mRNAs to facilitate mRNA translational regulation in response to envelope stress, environmental stress and changes in metabolite concentrations. Also binds with high specificity to tRNAs. This is RNA-binding protein Hfq from Cellvibrio japonicus (strain Ueda107) (Pseudomonas fluorescens subsp. cellulosa).